The following is a 141-amino-acid chain: Large ribosomal subunit protein uL11 (141 aa).

It belongs to the universal ribosomal protein uL11 family. In terms of assembly, part of the ribosomal stalk of the 50S ribosomal subunit. Interacts with L10 and the large rRNA to form the base of the stalk. L10 forms an elongated spine to which L12 dimers bind in a sequential fashion forming a multimeric L10(L12)X complex. In terms of processing, one or more lysine residues are methylated.

In terms of biological role, forms part of the ribosomal stalk which helps the ribosome interact with GTP-bound translation factors. This Campylobacter fetus subsp. fetus (strain 82-40) protein is Large ribosomal subunit protein uL11.